We begin with the raw amino-acid sequence, 447 residues long: Putative branched-chain amino acid carrier protein SAUSA300_1300 (447 aa).

12 helical membrane passes run 6-26 (WVIGFTLFAMFFGAGNLIFPP), 40-60 (ILAFVLTGIGLPLLGVIVGAL), 74-94 (PKFSILFLIIIYLTIGPLFAI), 114-134 (SSIALFIFTIIYFIVVLYICL), 143-163 (IGSLLTPLLLITILAMIIKGY), 193-213 (GYLTMDAIAAIAFSMIVVNAV), 229-249 (LTAGLIAAVALIFIYISLGYI), 290-310 (LLGIIVALACLTTACGLIVAV), 326-346 (FVLVFILMSFIIANQGLNAVI), 350-370 (IPVLSIVYPVAITVVLLILIA), 382-402 (IPVIIVFILSIFSVISKLGWL), and 417-437 (LEWFPVAIIATILGYLVGIFV).

The protein belongs to the branched chain amino acid transporter family.

The protein localises to the cell membrane. In terms of biological role, component of the transport system for branched-chain amino acids (leucine, isoleucine and valine), which is coupled to a proton motive force (Potential). Contributes to NaCl tolerance. This chain is Putative branched-chain amino acid carrier protein SAUSA300_1300, found in Staphylococcus aureus (strain USA300).